A 304-amino-acid polypeptide reads, in one-letter code: Calcium release-activated calcium channel protein 1 (304 aa).

Residues 1–11 (MHPEPAPPPSH) are compositionally biased toward pro residues. Residues 1–50 (MHPEPAPPPSHSNPELPVSGGSSTSGSRRSRRRSGDGEPSGAPPLPPPPP) form a disordered region. Over 1–89 (MHPEPAPPPS…KLYLSRAKLK (89 aa)) the chain is Cytoplasmic. The interval 3 to 49 (PEPAPPPSHSNPELPVSGGSSTSGSRRSRRRSGDGEPSGAPPLPPPP) is required for generation of inwardly rectifying CRAC currents. Over residues 12-27 (SNPELPVSGGSSTSGS) the composition is skewed to low complexity. The interval 39–61 (PSGAPPLPPPPPAVSYPDWIGQS) is AKAP5 association region. The span at 41–50 (GAPPLPPPPP) shows a compositional bias: pro residues. The interval 72 to 92 (SMQALSWRKLYLSRAKLKASS) is interaction with STIM1. A helical membrane pass occupies residues 90–107 (ASSRTSALLSGFAMVAMV). Over 108–121 (EVQLDTDHDYPPGL) the chain is Extracellular. A helical membrane pass occupies residues 122 to 142 (LIVFSACTTVLVAVHLFALMI). Residues 143-175 (STCILPNIEAVSNVHNLNSVKESPHERMHRHIE) are Cytoplasmic-facing. The helical transmembrane segment at 176–196 (LAWAFSTVIGTLLFLAEVVLL) threads the bilayer. Topologically, residues 197-237 (CWVKFLPLKRQAGQPSPTKPPAESVIVANHSDSSGITPGEA) are extracellular. The N-linked (GlcNAc...) asparagine glycan is linked to Asn-225. The helical transmembrane segment at 238 to 258 (AAIASTAIMVPCGLVFIVFAV) threads the bilayer. Residues 259–304 (HFYRSLVSHKTDRQFQELNELAEFARLQDQLDHRGDHSLTPGTHYA) lie on the Cytoplasmic side of the membrane. Residues 275–295 (ELNELAEFARLQDQLDHRGDH) form an interaction with STIM1 region. Position 298 is a phosphothreonine (Thr-298).

This sequence belongs to the Orai family. Oligomerizes in homomeric and heteromeric ORAI complexes. Native CRAC channels most likely consist of hexameric ORAI heteromers, implying that diverse ORAI1, ORAI2 and ORAI3 subunit combinations with distinct biophysical properties can operate in a cell-type specific way. ARC channels are heteropentamers consisting of three ORAI1 and two ORAI3 subunits. Interacts with STIM1 and STIM2; this regulates channel activity. Interacts with CALM; this may displace STIM1 and STIM2 and might thereby modulate channel activity. Interacts (via N-terminus) with AKAP5 upon store depletion. Interacts with CRACR2A/EFCAB4B; the interaction is direct and takes place in absence of Ca(2+). Forms a complex with CRACR2A/EFCAB4B and STIM1 at low concentration of Ca(2+), the complex dissociates at elevated Ca(2+) concentrations. Interacts with ASPH (isoform 8). Interacts with SLC35G1. Interacts with UBQLN1. Interacts with ADCY8; interaction is calcium store depletion independent; interaction occurs in membrane raft; interaction increases markedly after store depletion; positively regulates SOCE-induced adenylate cyclase activity; contributes to the targeting of ADCY8 to discrete regions of the plasma membrane that are shielded from other calcium events. Interacts with EFHB; the interaction takes place upon Ca(2+)-store depletion. Interacts (via N- and C-termini) with ATP2C2 (via N-terminus); this interaction regulates Ca(2+) influx at the plasma membrane. Interacts with TSPAN18; this interaction regulates ORAI1 exit from the endoplasmic (ER), and/or Golgi, and trafficking to the cell surface. Post-translationally, N-glycosylated. N-glycosylation inhibits channel activity in T cells. Ubiquitinated. In terms of processing, cys-195 is oxidated, leading to inactivation of channel activity. In terms of tissue distribution, expressed in lactating mammary epithelium (at protein level).

It localises to the cell membrane. Its subcellular location is the basolateral cell membrane. It carries out the reaction Ca(2+)(in) = Ca(2+)(out). With respect to regulation, oxidation at Cys-197 leads to inactivation of channel activity. Pore-forming subunit of two major inward rectifying Ca(2+) channels at the plasma membrane: Ca(2+) release-activated Ca(2+) (CRAC) channels and arachidonate-regulated Ca(2+)-selective (ARC) channels. Assembles with ORAI2 and ORAI3 to form hexameric CRAC channels that mediate Ca(2+) influx upon depletion of endoplasmic reticulum Ca(2+) store and channel activation by Ca(2+) sensor STIM1, a process known as store-operated Ca(2+) entry (SOCE). Various pore subunit combinations may account for distinct CRAC channel spatiotemporal and cell-type specific dynamics. ORAI1 mainly contributes to the generation of Ca(2+) plateaus involved in sustained Ca(2+) entry and is dispensable for cytosolic Ca(2+) oscillations, whereas ORAI2 and ORAI3 generate oscillatory patterns. CRAC channels assemble in Ca(2+) signaling microdomains where Ca(2+) influx is coupled to calmodulin and calcineurin signaling and activation of NFAT transcription factors recruited to ORAI1 via AKAP5. Activates NFATC2/NFAT1 and NFATC3/NFAT4-mediated transcriptional responses. CRAC channels are the main pathway for Ca(2+) influx in T cells and promote the immune response to pathogens by activating NFAT-dependent cytokine and chemokine transcription. Assembles with ORAI3 to form channels that mediate store-independent Ca(2+) influx in response to inflammatory metabolites arachidonate or its derivative leukotriene C4, termed ARC and LRC channels respectively. Plays a prominent role in Ca(2+) influx at the basolateral membrane of mammary epithelial cells independently of the Ca(2+) content of endoplasmic reticulum or Golgi stores. May mediate transepithelial transport of large quantities of Ca(2+) for milk secretion. This Mus musculus (Mouse) protein is Calcium release-activated calcium channel protein 1 (Orai1).